A 257-amino-acid polypeptide reads, in one-letter code: MSGFDNLNSGFYQTSYSIDEQSQQSYDYGGSGGPYSKQYAGCDYSQQGRFVPPDMMQPQQTYTGQIYQPTQAYPPTTPQPFYGDSFEEEPPLLEELGINFDHIWQKTLTVLHPLRAADGSIMNETDLAGPVVFCLAFGATLLLAGKIQFGYVYGISAIGCLGMFCLLNLMSMTGVSFGCVASVLGYCLLPMILLSSFAVVFSLQGMVGILLTATIIGWCSFSASKIFISALAMDGQQLLVAYPCALLYGVFALISVF.

The Cytoplasmic portion of the chain corresponds to 1-124 (MSGFDNLNSG…RAADGSIMNE (124 aa)). Residues 75–106 (PTTPQPFYGDSFEEEPPLLEELGINFDHIWQK) are interaction with Sec23. Residues 125–145 (TDLAGPVVFCLAFGATLLLAG) traverse the membrane as a helical segment. Position 146 (Lys-146) is a topological domain, lumenal. The chain crosses the membrane as a helical span at residues 147-167 (IQFGYVYGISAIGCLGMFCLL). The Cytoplasmic segment spans residues 168-173 (NLMSMT). The helical transmembrane segment at 174 to 194 (GVSFGCVASVLGYCLLPMILL) threads the bilayer. Residues 195–196 (SS) lie on the Lumenal side of the membrane. The helical transmembrane segment at 197–217 (FAVVFSLQGMVGILLTATIIG) threads the bilayer. Over 218–236 (WCSFSASKIFISALAMDGQ) the chain is Cytoplasmic. Residues 237–257 (QLLVAYPCALLYGVFALISVF) traverse the membrane as a helical segment.

Belongs to the YIP1 family. Interacts with the COPII coat components Sec23 (SEC23A and/or SEC23B) and Sec24 (SEC24A and/or SEC24B). Interacts with YIF1A. May interact with RAB1A. Interacts with YIPF3 and YIPF4. As to expression, ubiquitously expressed.

It is found in the golgi apparatus. The protein resides in the cis-Golgi network membrane. Its subcellular location is the cytoplasmic vesicle. It localises to the COPII-coated vesicle. The protein localises to the endoplasmic reticulum membrane. Its function is as follows. Plays a role in transport between endoplasmic reticulum and Golgi. In pancreatic beta cells, required to transport proinsulin from endoplasmic reticulum into the Golgi. The sequence is that of Protein YIPF5 from Mus musculus (Mouse).